Here is a 457-residue protein sequence, read N- to C-terminus: MDIREMDLKRQEANALFKKQMIDEALEIYKTSFLEATKSVVPGTRNDLLEEQLSLLAYNISVVYYKRKNFPKSLAFGLESLKHRKSDKVLCKICAIYLRLGMLREYKEMYDQMVTRSSGPEVAFLLKRMKLSEVIVEKHLEKRVTLESLHELSKEISGGRSIPADTLESILEQGESILLGCENVVHTESSGEVLIFGDTHGQYFDVVSILNKVFDKDRMVIFNGDYVDRGSHSVENFALLLSLKILFPGRVHLTRGNHELSDINRVYGFYDEVKRKYPFSSDSVYRRFQDAFRALPISIIVNEKVFITHGGLPEAPVKVDNLQEIYRMTDTHTDELLKGLLWSDPEEILGTEESKRRAGVVFGADVTARFLERNGLDLLVRSHQAVDDGYRVHHGGKVVTIFSAPEYEGSKGPGSYLVLNPSAGEADEIVEISPLTRYKAVKFGRSDGKEVLRLLCN.

4 residues coordinate Mn(2+): Asp198, His200, Asp225, and Asn257. The active-site Proton donor is the His258. Positions 309 and 383 each coordinate Mn(2+).

Belongs to the PPP phosphatase family. PP-1 subfamily. Mn(2+) is required as a cofactor.

It carries out the reaction O-phospho-L-seryl-[protein] + H2O = L-seryl-[protein] + phosphate. The enzyme catalyses O-phospho-L-threonyl-[protein] + H2O = L-threonyl-[protein] + phosphate. This chain is Probable serine/threonine-protein phosphatase ECU05_0440, found in Encephalitozoon cuniculi (strain GB-M1) (Microsporidian parasite).